The chain runs to 337 residues: DNA-directed RNA polymerase subunit alpha (337 aa).

Residues 1-233 (MVREEVTIST…NLFIPFLHAE (233 aa)) form an alpha N-terminal domain (alpha-NTD) region. The segment at 266-337 (GIALKCIFID…FAMNLPKDFF (72 aa)) is alpha C-terminal domain (alpha-CTD).

This sequence belongs to the RNA polymerase alpha chain family. In plastids the minimal PEP RNA polymerase catalytic core is composed of four subunits: alpha, beta, beta', and beta''. When a (nuclear-encoded) sigma factor is associated with the core the holoenzyme is formed, which can initiate transcription.

It is found in the plastid. The protein localises to the chloroplast. It catalyses the reaction RNA(n) + a ribonucleoside 5'-triphosphate = RNA(n+1) + diphosphate. DNA-dependent RNA polymerase catalyzes the transcription of DNA into RNA using the four ribonucleoside triphosphates as substrates. In Ceratophyllum demersum (Rigid hornwort), this protein is DNA-directed RNA polymerase subunit alpha.